The primary structure comprises 353 residues: UPF0283 membrane protein KPK_3110 (353 aa).

Helical transmembrane passes span 70-90 (MVSA…VQWT), 99-119 (WIAL…VGSV), and 213-233 (ESTL…FIAW).

Belongs to the UPF0283 family.

The protein resides in the cell inner membrane. The polypeptide is UPF0283 membrane protein KPK_3110 (Klebsiella pneumoniae (strain 342)).